A 121-amino-acid polypeptide reads, in one-letter code: Large ribosomal subunit protein bL19 (121 aa).

It belongs to the bacterial ribosomal protein bL19 family.

In terms of biological role, this protein is located at the 30S-50S ribosomal subunit interface and may play a role in the structure and function of the aminoacyl-tRNA binding site. The protein is Large ribosomal subunit protein bL19 of Legionella pneumophila (strain Paris).